The following is a 386-amino-acid chain: Succinate--CoA ligase [ADP-forming] subunit beta (386 aa).

The ATP-grasp domain occupies 9–244; the sequence is KEILRKYGVP…HDEEDPLETR (236 aa). ATP contacts are provided by residues Lys-46, 53-55, Glu-99, Cys-102, and Glu-107; that span reads GRG. Residues Asn-199 and Asp-213 each contribute to the Mg(2+) site. Substrate contacts are provided by residues Asn-264 and 321-323; that span reads GIM.

Belongs to the succinate/malate CoA ligase beta subunit family. Heterotetramer of two alpha and two beta subunits. It depends on Mg(2+) as a cofactor.

The catalysed reaction is succinate + ATP + CoA = succinyl-CoA + ADP + phosphate. The enzyme catalyses GTP + succinate + CoA = succinyl-CoA + GDP + phosphate. Its pathway is carbohydrate metabolism; tricarboxylic acid cycle; succinate from succinyl-CoA (ligase route): step 1/1. In terms of biological role, succinyl-CoA synthetase functions in the citric acid cycle (TCA), coupling the hydrolysis of succinyl-CoA to the synthesis of either ATP or GTP and thus represents the only step of substrate-level phosphorylation in the TCA. The beta subunit provides nucleotide specificity of the enzyme and binds the substrate succinate, while the binding sites for coenzyme A and phosphate are found in the alpha subunit. The sequence is that of Succinate--CoA ligase [ADP-forming] subunit beta from Rickettsia peacockii (strain Rustic).